The primary structure comprises 395 residues: Extracellular cysteine protease (395 aa).

An N-terminal signal peptide occupies residues 1 to 30 (MKKKLSYMITIMLAFTLSLALGLFFNSAHA). The propeptide occupies 31-221 (DSLPQKNGAN…TLEYQSTRNE (191 aa)). Residues C245, H341, and N362 contribute to the active site.

This sequence belongs to the peptidase C47 family. In terms of processing, proteolytically cleaved.

It localises to the secreted. The protein localises to the cell wall. In terms of biological role, cysteine protease able to cleave elastin, insulin, myoglobin, fibronectin, fibrinogen, HMW-kininogen, alpha-1-protease inhibitor and alpha-1-antitrypsin. Along with other extracellular proteases may contribute to the colonization and infection of human tissues. This chain is Extracellular cysteine protease (ecpA), found in Staphylococcus epidermidis (strain ATCC 35984 / DSM 28319 / BCRC 17069 / CCUG 31568 / BM 3577 / RP62A).